Consider the following 522-residue polypeptide: Tetratricopeptide repeat and J domain-containing co-chaperone DNJ1 (522 aa).

The N-terminal stretch at 1 to 22 is a signal peptide; it reads MKGFLLVALPVLFLSLSTQVFG. 7 TPR repeats span residues 29 to 62, 63 to 96, 97 to 130, 142 to 175, 210 to 243, 256 to 289, and 356 to 389; these read AAQIVQNANRLLAEGSYSAAARAYGEAIELDPTG, YANYYKRATAYLSMGRHNAALDDFEQILRINPGF, VQAHYQRAKILAKEGDFAKAQYELKAYVRTKSDS, GEAAEKSALQAFEKGKWQVCVEHSTKALEVGPNS, TYLPLQLSNIAYFIRASSQAAAHIKQCLHFDPDS, LEKDAARVRNFIESGTYRQAIKILDGDDGLLVRF, and VDSWISRGERLLRVEKWEEAMRAVEKAFELSGRS. Residues 410-471 form the J domain; sequence DYYKVLGVPR…ELRQRYDNGD (62 aa). The tract at residues 465–494 is disordered; it reads QRYDNGDDPNDPTGGQQHNPFAHHGGGMPF.

The protein localises to the endoplasmic reticulum lumen. Its function is as follows. Endoplasmic reticulum co-chaperone crucial for survival and virulence factor production at elevated temperatures representative of febrile patients during infection. Contributes to virulence in a mouse model of cryptococcosis. With chaperone CNE1, coordinately maintains ER homeostasis and contributes to maintenance of cell wall architecture. The protein is Tetratricopeptide repeat and J domain-containing co-chaperone DNJ1 of Cryptococcus neoformans var. grubii serotype A (strain H99 / ATCC 208821 / CBS 10515 / FGSC 9487) (Filobasidiella neoformans var. grubii).